A 375-amino-acid chain; its full sequence is Growth/differentiation factor 8 (375 aa).

The N-terminal stretch at 1–23 (MQKLQIYVYIYLFMLIVAGPVDL) is a signal peptide. Residues 24–266 (NENSEQKENV…VTDTPKRSRR (243 aa)) constitute a propeptide that is removed on maturation. Residue asparagine 71 is glycosylated (N-linked (GlcNAc...) asparagine). 4 disulfides stabilise this stretch: cysteine 272–cysteine 282, cysteine 281–cysteine 340, cysteine 309–cysteine 372, and cysteine 313–cysteine 374.

This sequence belongs to the TGF-beta family. In terms of assembly, homodimer; disulfide-linked. Interacts with WFIKKN2, leading to inhibit its activity. Interacts with FSTL3. In terms of processing, synthesized as large precursor molecule that undergoes proteolytic cleavage to generate an N-terminal propeptide and a disulfide linked C-terminal dimer, which is the biologically active molecule. The circulating form consists of a latent complex of the C-terminal dimer and other proteins, including its propeptide, which maintain the C-terminal dimer in a latent, inactive state. Ligand activation requires additional cleavage of the prodomain by a tolloid-like metalloproteinase.

It localises to the secreted. In terms of biological role, acts specifically as a negative regulator of skeletal muscle growth. The chain is Growth/differentiation factor 8 (MSTN) from Sus scrofa (Pig).